A 394-amino-acid chain; its full sequence is MSRSAAEFLKPQNVASTHYLDNRVYWDHEIFEEEKKRIFSKVWKFVCHVSEIPSTFDYRTIKVADTPLVVIRGKDEKVRTFVNACSHRGIQIVRRPRGNAKTMECIFHRWNYDSTNGELTGAPRKEAYGPSNFDLKQCGLREVRTETYLGLVFVNLDDSAVSLSEFIGDALEMEKDILGAEELEVFDYYEQVLDTNWKNWQETNLDLYHEFMHFANRKTGLTVKEYYQRAWKLYPNGHAAIERYRAQYSNYAGWQDRDDGIRLPGLHPNEFQLVNLFPDLAINARGTVIRIDSQTPISPGKTLVQYRGLGLKRDSERERVQRVRDYTSIWGPFGTNLAEDTLATSLHAKTIQTGSVPFTYLTRDEGGMTQDDLGLRTFYREWERLMSRQANQIR.

In terms of domain architecture, Rieske spans 43 to 154; the sequence is WKFVCHVSEI…TETYLGLVFV (112 aa). Cys-85, His-87, Cys-105, and His-108 together coordinate [2Fe-2S] cluster. The Fe cation site is built by His-209 and His-213.

This sequence belongs to the bacterial ring-hydroxylating dioxygenase alpha subunit family. As to quaternary structure, heterotetramer with a alpha2beta2 structure. It depends on [2Fe-2S] cluster as a cofactor. Requires Fe cation as cofactor.

It catalyses the reaction 2-aminobenzenesulfonate + NADH + O2 + 2 H(+) = 2,3-dihydroxybenzenesulfonate + NH4(+) + NAD(+). With respect to regulation, inhibited by o-phenanthroline. In terms of biological role, alpha subunit of the oxygenase component of the 2-aminobenzenesulfonate 2,3-dioxygenase system (deaminating) (ABSDOS). Can use 2-aminobenzenesulfonate (ABS), benzenesulfonate (BS), 4-toluenesulfonate (TS), 2-nitrobenzenesulfonate, 3- and 4-aminobenzenesulfonates, 4-chloro- and 4-hydroxybenzenesulfonates and pyridine-3-sulfonate as substrates. No desulfonation of ABS to aminocatechol or aminophenol detected. This chain is 2-aminobenzenesulfonate 2,3-dioxygenase subunit alpha, found in Alcaligenes sp.